The sequence spans 126 residues: Large ribosomal subunit protein bL12 (126 aa).

The protein belongs to the bacterial ribosomal protein bL12 family. As to quaternary structure, homodimer. Part of the ribosomal stalk of the 50S ribosomal subunit. Forms a multimeric L10(L12)X complex, where L10 forms an elongated spine to which 2 to 4 L12 dimers bind in a sequential fashion. Binds GTP-bound translation factors.

Its function is as follows. Forms part of the ribosomal stalk which helps the ribosome interact with GTP-bound translation factors. Is thus essential for accurate translation. The sequence is that of Large ribosomal subunit protein bL12 from Solibacter usitatus (strain Ellin6076).